The primary structure comprises 607 residues: WD repeat-containing protein 1-B (607 aa).

13 WD repeats span residues 4–45 (EIKK…IRNI), 48–87 (PAIA…IWDT), 93–135 (LLKY…LWDT), 138–176 (SVGE…FFEG), 180–218 (KFKF…LYDG), 224–263 (VCSL…IWDV), 270–306 (TTFN…YLDK), 311–351 (KPFR…YWDA), 358–408 (TFTG…KMDV), 432–474 (LKDK…LYSI), 480–518 (KDEG…VFSV), 523–561 (SEHN…VWTL), and 566–604 (TRIK…QWTV).

It belongs to the WD repeat AIP1 family.

The protein resides in the cell membrane. The protein localises to the cytoplasm. It is found in the cytoskeleton. Its subcellular location is the nucleus. Functionally, induces disassembly of actin filaments in conjunction with ADF/cofilin family proteins. Doesn't sever actin filaments alone, but caps the barbed ends of filaments severed by cofilin, which blocks annealing and depolymerization and allows more extensive severing by cofilin. The sequence is that of WD repeat-containing protein 1-B (wdr1-b) from Xenopus laevis (African clawed frog).